Here is a 114-residue protein sequence, read N- to C-terminus: T-cell leukemia/lymphoma protein 1A (114 aa).

Belongs to the TCL1 family. In terms of assembly, homodimer. Interacts with AKT1, AKT2 and AKT3 (via PH domain). Interacts with PNPT1; the interaction has no effect on PNPT1 exonuclease activity. As to expression, restricted in the T-cell lineage to immature thymocytes and activated peripheral lymphocytes. Preferentially expressed early in T- and B-lymphocyte differentiation.

The protein localises to the cytoplasm. It localises to the nucleus. Its subcellular location is the microsome. It is found in the endoplasmic reticulum. Functionally, enhances the phosphorylation and activation of AKT1, AKT2 and AKT3. Promotes nuclear translocation of AKT1. Enhances cell proliferation, stabilizes mitochondrial membrane potential and promotes cell survival. The protein is T-cell leukemia/lymphoma protein 1A (TCL1A) of Homo sapiens (Human).